A 266-amino-acid polypeptide reads, in one-letter code: Single-stranded DNA-binding protein WHY1, chloroplastic (266 aa).

The N-terminal 37 residues, 1-37 (MPPPAPLFLSLASTPPPALMPVHHPRAPQSLTLVPPV), are a transit peptide targeting the chloroplast. The disordered stretch occupies residues 53-81 (SPRHSDYFDPRAPPPPRGDGGYGRPPNGA). The segment at 94-99 (KGKAAL) is required for ssDNA binding. The short motif at 172–185 (KGRSEEGKVRKVLK) is the Nuclear localization signal element.

The protein belongs to the Whirly family. In terms of assembly, homotetramer.

The protein localises to the plastid. It localises to the chloroplast stroma. It is found in the nucleus. Functionally, single-stranded DNA and RNA binding protein that maintains plastid genome stability by preventing break-induced and short homology-dependent illegitimate recombinations. Functions in RNA metabolism and is involved in the maturation of the atpF and 23S ribosomal RNAs. The sequence is that of Single-stranded DNA-binding protein WHY1, chloroplastic (WHY1) from Zea mays (Maize).